We begin with the raw amino-acid sequence, 298 residues long: UPF0282 protein Kcr_0286 (298 aa).

Belongs to the UPF0282 family.

In Korarchaeum cryptofilum (strain OPF8), this protein is UPF0282 protein Kcr_0286.